Here is a 304-residue protein sequence, read N- to C-terminus: D-alanine--D-alanine ligase (304 aa).

The ATP-grasp domain maps to 103 to 299; sequence KLIWQALGLP…FADLCIEILK (197 aa). Residue 129 to 184 participates in ATP binding; it reads EEKLGLPMFVKPAAEGSSVGVVKVKGKGRLKSVYEELKHFQGEIIAERFIGGGEYS. Residues D253, E266, and N268 each coordinate Mg(2+).

It belongs to the D-alanine--D-alanine ligase family. It depends on Mg(2+) as a cofactor. Requires Mn(2+) as cofactor.

The protein resides in the cytoplasm. The enzyme catalyses 2 D-alanine + ATP = D-alanyl-D-alanine + ADP + phosphate + H(+). Its pathway is cell wall biogenesis; peptidoglycan biosynthesis. Cell wall formation. The polypeptide is D-alanine--D-alanine ligase (Neisseria meningitidis serogroup A / serotype 4A (strain DSM 15465 / Z2491)).